The sequence spans 257 residues: Imidazole glycerol phosphate synthase subunit HisF (257 aa).

Active-site residues include D11 and D130.

This sequence belongs to the HisA/HisF family. Heterodimer of HisH and HisF.

The protein localises to the cytoplasm. It carries out the reaction 5-[(5-phospho-1-deoxy-D-ribulos-1-ylimino)methylamino]-1-(5-phospho-beta-D-ribosyl)imidazole-4-carboxamide + L-glutamine = D-erythro-1-(imidazol-4-yl)glycerol 3-phosphate + 5-amino-1-(5-phospho-beta-D-ribosyl)imidazole-4-carboxamide + L-glutamate + H(+). Its pathway is amino-acid biosynthesis; L-histidine biosynthesis; L-histidine from 5-phospho-alpha-D-ribose 1-diphosphate: step 5/9. In terms of biological role, IGPS catalyzes the conversion of PRFAR and glutamine to IGP, AICAR and glutamate. The HisF subunit catalyzes the cyclization activity that produces IGP and AICAR from PRFAR using the ammonia provided by the HisH subunit. The chain is Imidazole glycerol phosphate synthase subunit HisF from Vibrio campbellii (strain ATCC BAA-1116).